Here is a 100-residue protein sequence, read N- to C-terminus: Small ribosomal subunit protein uS17 (100 aa).

It belongs to the universal ribosomal protein uS17 family. As to quaternary structure, part of the 30S ribosomal subunit.

Functionally, one of the primary rRNA binding proteins, it binds specifically to the 5'-end of 16S ribosomal RNA. This is Small ribosomal subunit protein uS17 from Erythrobacter litoralis (strain HTCC2594).